The following is a 1081-amino-acid chain: Isoleucine--tRNA ligase (1081 aa).

The 'HIGH' region motif lies at 53-63 (PFATGLPHYGN). Residues 607–611 (KMSKS) carry the 'KMSKS' region motif. Lys610 contacts ATP.

The protein belongs to the class-I aminoacyl-tRNA synthetase family.

It carries out the reaction tRNA(Ile) + L-isoleucine + ATP = L-isoleucyl-tRNA(Ile) + AMP + diphosphate. The polypeptide is Isoleucine--tRNA ligase (ILSA) (Tetrahymena thermophila).